A 443-amino-acid chain; its full sequence is ATP-dependent protease ATPase subunit HslU (443 aa).

Residues Ile-18, 60 to 65 (GVGKTE), Asp-256, Glu-321, and Arg-393 contribute to the ATP site.

The protein belongs to the ClpX chaperone family. HslU subfamily. A double ring-shaped homohexamer of HslV is capped on each side by a ring-shaped HslU homohexamer. The assembly of the HslU/HslV complex is dependent on binding of ATP.

It localises to the cytoplasm. In terms of biological role, ATPase subunit of a proteasome-like degradation complex; this subunit has chaperone activity. The binding of ATP and its subsequent hydrolysis by HslU are essential for unfolding of protein substrates subsequently hydrolyzed by HslV. HslU recognizes the N-terminal part of its protein substrates and unfolds these before they are guided to HslV for hydrolysis. The protein is ATP-dependent protease ATPase subunit HslU of Escherichia coli O157:H7 (strain EC4115 / EHEC).